The following is a 79-amino-acid chain: Putative membrane protein insertion efficiency factor (79 aa).

This sequence belongs to the UPF0161 family.

It is found in the cell inner membrane. In terms of biological role, could be involved in insertion of integral membrane proteins into the membrane. This chain is Putative membrane protein insertion efficiency factor, found in Synechocystis sp. (strain ATCC 27184 / PCC 6803 / Kazusa).